A 120-amino-acid polypeptide reads, in one-letter code: Ribonuclease P protein component (120 aa).

This sequence belongs to the RnpA family. In terms of assembly, consists of a catalytic RNA component (M1 or rnpB) and a protein subunit.

The catalysed reaction is Endonucleolytic cleavage of RNA, removing 5'-extranucleotides from tRNA precursor.. In terms of biological role, RNaseP catalyzes the removal of the 5'-leader sequence from pre-tRNA to produce the mature 5'-terminus. It can also cleave other RNA substrates such as 4.5S RNA. The protein component plays an auxiliary but essential role in vivo by binding to the 5'-leader sequence and broadening the substrate specificity of the ribozyme. The sequence is that of Ribonuclease P protein component from Chlamydia trachomatis serovar A (strain ATCC VR-571B / DSM 19440 / HAR-13).